Consider the following 201-residue polypeptide: Imidazole glycerol phosphate synthase subunit HisH (201 aa).

Residues 1 to 201 (MVFIADYGAG…LKVLANFAEL (201 aa)) enclose the Glutamine amidotransferase type-1 domain. The active-site Nucleophile is Cys79. Active-site residues include His183 and Glu185.

Heterodimer of HisH and HisF.

The protein resides in the cytoplasm. It catalyses the reaction 5-[(5-phospho-1-deoxy-D-ribulos-1-ylimino)methylamino]-1-(5-phospho-beta-D-ribosyl)imidazole-4-carboxamide + L-glutamine = D-erythro-1-(imidazol-4-yl)glycerol 3-phosphate + 5-amino-1-(5-phospho-beta-D-ribosyl)imidazole-4-carboxamide + L-glutamate + H(+). The catalysed reaction is L-glutamine + H2O = L-glutamate + NH4(+). It functions in the pathway amino-acid biosynthesis; L-histidine biosynthesis; L-histidine from 5-phospho-alpha-D-ribose 1-diphosphate: step 5/9. Functionally, IGPS catalyzes the conversion of PRFAR and glutamine to IGP, AICAR and glutamate. The HisH subunit catalyzes the hydrolysis of glutamine to glutamate and ammonia as part of the synthesis of IGP and AICAR. The resulting ammonia molecule is channeled to the active site of HisF. This chain is Imidazole glycerol phosphate synthase subunit HisH, found in Chlorobium chlorochromatii (strain CaD3).